A 372-amino-acid polypeptide reads, in one-letter code: Innexin-16 (372 aa).

4 consecutive transmembrane segments (helical) span residues 31 to 51 (VVTTSILIAFSLLLFAKNYVG), 106 to 126 (VPFLLVIQALFFCVPRAFWII), 181 to 201 (LVMKLLILLNIVLQFFLLNSF), and 263 to 283 (IFIFLWFWFAFLLVATAGDFV). Residue Asn-352 is glycosylated (N-linked (GlcNAc...) asparagine).

It belongs to the pannexin family.

The protein localises to the cell membrane. It localises to the cell junction. Its subcellular location is the gap junction. In terms of biological role, structural component of the gap junctions. Required for signals downstream of defecation clock. The sequence is that of Innexin-16 (inx-16) from Caenorhabditis elegans.